Reading from the N-terminus, the 436-residue chain is DNA-dependent metalloprotease SPRTN (436 aa).

In terms of domain architecture, SprT-like spans 19–186 (IRALFLEFND…RTCGGEFVKI (168 aa)). Residue H85 participates in Zn(2+) binding. The active site involves E86. Zn(2+) is bound by residues H89 and H104. The tract at residues 184–219 (VKIKEPENYSQKRKRNNDPTKSELGNSSHVKINKGK) is disordered. Positions 231–239 (FSGTGYKLF) match the SHP-box motif. Residues 271–277 (QTDSTFL) carry the PIP-box motif. The interval 300-321 (GSPIKLPSSSNNKSHQDSSKQK) is disordered. The UBZ4-type zinc finger occupies 408–435 (KVCCPVCGTEIFESKINDHLDTCLQNYN). Residues C411, C414, H426, and C430 each coordinate Zn(2+).

This sequence belongs to the Spartan family. In terms of assembly, homodimer. Zn(2+) is required as a cofactor. Post-translationally, autocatalytically cleaved in response to double-stranded DNA-binding: autocatalytic cleavage takes place in trans and leads to inactivation.

It localises to the nucleus. The protein localises to the chromosome. DNA-binding activates the protease activity: single-stranded DNA-binding specifically activates ability to cleave covalent DNA-protein cross-links (DPCs). In contrast, double-stranded DNA-binding specifically activates autocatalytic cleavage, and subsequent inactivation. Its function is as follows. DNA-dependent metalloendopeptidase that mediates the proteolytic cleavage of covalent DNA-protein cross-links (DPCs) during DNA synthesis, thereby playing a key role in maintaining genomic integrity. DPCs are highly toxic DNA lesions that interfere with essential chromatin transactions, such as replication and transcription, and which are induced by reactive agents, such as UV light or formaldehyde. Associates with the DNA replication machinery and specifically removes DPCs during DNA synthesis. Catalyzes proteolytic cleavage of the hmces DNA-protein cross-link following unfolding by the brip1/fancj helicase. Acts as a pleiotropic protease for DNA-binding proteins cross-linked with DNA, such as top1, top2a, histones H3 and H4. Mediates degradation of DPCs that are not ubiquitinated, while it is not able to degrade ubiquitinated DPCs. SPRTN activation requires polymerase collision with DPCs followed by helicase bypass of DPCs. May also act as a 'reader' of ubiquitinated pcna: facilitates chromatin association of rad18 and is required for efficient pcna monoubiquitination, promoting a feed-forward loop to enhance pcna ubiquitination and translesion DNA synthesis. Acts as a regulator of translesion DNA synthesis by recruiting vcp/p97 to sites of DNA damage. The protein is DNA-dependent metalloprotease SPRTN of Xenopus tropicalis (Western clawed frog).